A 556-amino-acid chain; its full sequence is Dihydroxy-acid dehydratase (556 aa).

Cys47 lines the [2Fe-2S] cluster pocket. Asp79 provides a ligand contact to Mg(2+). [2Fe-2S] cluster is bound at residue Cys120. Positions 121 and 122 each coordinate Mg(2+). Lys122 bears the N6-carboxylysine mark. Position 192 (Cys192) interacts with [2Fe-2S] cluster. Glu444 contributes to the Mg(2+) binding site. Catalysis depends on Ser470, which acts as the Proton acceptor.

Belongs to the IlvD/Edd family. Homodimer. [2Fe-2S] cluster serves as cofactor. Requires Mg(2+) as cofactor.

It catalyses the reaction (2R)-2,3-dihydroxy-3-methylbutanoate = 3-methyl-2-oxobutanoate + H2O. It carries out the reaction (2R,3R)-2,3-dihydroxy-3-methylpentanoate = (S)-3-methyl-2-oxopentanoate + H2O. It participates in amino-acid biosynthesis; L-isoleucine biosynthesis; L-isoleucine from 2-oxobutanoate: step 3/4. Its pathway is amino-acid biosynthesis; L-valine biosynthesis; L-valine from pyruvate: step 3/4. Functionally, functions in the biosynthesis of branched-chain amino acids. Catalyzes the dehydration of (2R,3R)-2,3-dihydroxy-3-methylpentanoate (2,3-dihydroxy-3-methylvalerate) into 2-oxo-3-methylpentanoate (2-oxo-3-methylvalerate) and of (2R)-2,3-dihydroxy-3-methylbutanoate (2,3-dihydroxyisovalerate) into 2-oxo-3-methylbutanoate (2-oxoisovalerate), the penultimate precursor to L-isoleucine and L-valine, respectively. The sequence is that of Dihydroxy-acid dehydratase from Prochlorococcus marinus (strain MIT 9211).